The chain runs to 248 residues: Probable transcriptional regulatory protein Plav_2114 (248 aa).

Belongs to the TACO1 family.

It is found in the cytoplasm. The sequence is that of Probable transcriptional regulatory protein Plav_2114 from Parvibaculum lavamentivorans (strain DS-1 / DSM 13023 / NCIMB 13966).